The primary structure comprises 196 residues: FMN-dependent NADH:quinone oxidoreductase (196 aa).

FMN contacts are provided by residues Ser10 and 17–19; that span reads SYS.

This sequence belongs to the azoreductase type 1 family. As to quaternary structure, homodimer. It depends on FMN as a cofactor.

It carries out the reaction 2 a quinone + NADH + H(+) = 2 a 1,4-benzosemiquinone + NAD(+). It catalyses the reaction N,N-dimethyl-1,4-phenylenediamine + anthranilate + 2 NAD(+) = 2-(4-dimethylaminophenyl)diazenylbenzoate + 2 NADH + 2 H(+). Its function is as follows. Quinone reductase that provides resistance to thiol-specific stress caused by electrophilic quinones. Functionally, also exhibits azoreductase activity. Catalyzes the reductive cleavage of the azo bond in aromatic azo compounds to the corresponding amines. This Metamycoplasma arthritidis (strain 158L3-1) (Mycoplasma arthritidis) protein is FMN-dependent NADH:quinone oxidoreductase.